A 141-amino-acid chain; its full sequence is Protein X (141 aa).

Positions 22-52 (GPQSSGPPFPRPAAGSAASSASSPSPSDESD) are disordered. Positions 33 to 48 (PAAGSAASSASSPSPS) are enriched in low complexity. Residues 68–113 (PCCLVFTCADLRTMDSTVNFVSWHAKRQLGMPSKDLWTPYIKDQLL) form a mitochondrial targeting sequence region.

Belongs to the orthohepadnavirus protein X family. May form homodimer. May interact with host CEBPA, CFLAR, CREB1, DDB1, E4F1, HBXIP, HSPD1/HSP60, NFKBIA, POLR2E and SMAD4. Interacts with host SMC5-SMC6 complex and induces its degradation. Interacts with host TRPC4AP; leading to prevent ubiquitination of TRPC4AP. Interacts with host PLSCR1; this interaction promotes ubiquitination and degradation of HBx and impairs HBx-mediated cell proliferation. A fraction may be phosphorylated in insect cells and HepG2 cells, a human hepatoblastoma cell line. Phosphorylated in vitro by host protein kinase C or mitogen-activated protein kinase. N-acetylated in insect cells.

Its subcellular location is the host cytoplasm. The protein resides in the host nucleus. It localises to the host mitochondrion. Its function is as follows. Multifunctional protein that plays a role in silencing host antiviral defenses and promoting viral transcription. Does not seem to be essential for HBV infection. May be directly involved in development of cirrhosis and liver cancer (hepatocellular carcinoma). Most of cytosolic activities involve modulation of cytosolic calcium. The effect on apoptosis is controversial depending on the cell types in which the studies have been conducted. May induce apoptosis by localizing in mitochondria and causing loss of mitochondrial membrane potential. May also modulate apoptosis by binding host CFLAR, a key regulator of the death-inducing signaling complex (DISC). Promotes viral transcription by using the host E3 ubiquitin ligase DDB1 to target the SMC5-SMC6 complex to proteasomal degradation. This host complex would otherwise bind to viral episomal DNA, and prevents its transcription. Moderately stimulates transcription of many different viral and cellular transcription elements. Promoters and enhancers stimulated by HBx contain DNA binding sites for NF-kappa-B, AP-1, AP-2, c-EBP, ATF/CREB, or the calcium-activated factor NF-AT. This chain is Protein X, found in Woodchuck hepatitis B virus (isolate w64/pWS23) (WHV).